Consider the following 407-residue polypeptide: Phosphopentomutase (407 aa).

Positions 10, 306, 311, 347, 348, and 359 each coordinate Mn(2+).

Belongs to the phosphopentomutase family. Mn(2+) serves as cofactor.

It is found in the cytoplasm. The enzyme catalyses 2-deoxy-alpha-D-ribose 1-phosphate = 2-deoxy-D-ribose 5-phosphate. It catalyses the reaction alpha-D-ribose 1-phosphate = D-ribose 5-phosphate. It participates in carbohydrate degradation; 2-deoxy-D-ribose 1-phosphate degradation; D-glyceraldehyde 3-phosphate and acetaldehyde from 2-deoxy-alpha-D-ribose 1-phosphate: step 1/2. Functionally, isomerase that catalyzes the conversion of deoxy-ribose 1-phosphate (dRib-1-P) and ribose 1-phosphate (Rib-1-P) to deoxy-ribose 5-phosphate (dRib-5-P) and ribose 5-phosphate (Rib-5-P), respectively. The protein is Phosphopentomutase of Salmonella gallinarum (strain 287/91 / NCTC 13346).